Reading from the N-terminus, the 428-residue chain is MNTSRSQAIFSAAQRLMPGGVSSPVRAFRSVGGQPIVFDRVKGAYAWDVDGNRFIDYIGSWGPAICGHAHPEVIAALQDALEKGTSFGAPCELENQLAEMVIDAVPSVEMVRFVNSGTEACMSVLRLMRAFTGRDKLIKFEGCYHGHADMFLVKAGSGVATLGLPDSPGVPRSTTSNTLTAPYNDLEAVKELFAENPDAISGVILEPVVGNAGFITPEPGFLEGLRELTREHGALLVFDEVMSGFRISYGGAQARFGVTPDLTTMGKVIGGGLPVGAYGGRAEIMEMVAPAGPMYQAGTLSGNPLAMTAGIKTLELLKQEGTYERLESTTERLINGILEAAKAAEVPITGNSIGAMFGFFLCEGPVRNFEDAKATDAERFGKLHRAMLERGIYLAPSAFEAGFTSLAHSEADIETTLKAFRESFAAVA.

The residue at position 267 (lysine 267) is an N6-(pyridoxal phosphate)lysine.

The protein belongs to the class-III pyridoxal-phosphate-dependent aminotransferase family. HemL subfamily. In terms of assembly, homodimer. The cofactor is pyridoxal 5'-phosphate.

The protein resides in the cytoplasm. It carries out the reaction (S)-4-amino-5-oxopentanoate = 5-aminolevulinate. It functions in the pathway porphyrin-containing compound metabolism; protoporphyrin-IX biosynthesis; 5-aminolevulinate from L-glutamyl-tRNA(Glu): step 2/2. Its pathway is porphyrin-containing compound metabolism; chlorophyll biosynthesis. This is Glutamate-1-semialdehyde 2,1-aminomutase from Prochlorococcus marinus (strain MIT 9303).